The following is a 163-amino-acid chain: Dual specificity phosphatase 28 (163 aa).

A Tyrosine-protein phosphatase domain is found at 10-151; the sequence is PFARVAPALF…LQKYEQTLQA (142 aa). C95 functions as the Phosphocysteine intermediate in the catalytic mechanism.

This sequence belongs to the protein-tyrosine phosphatase family. Non-receptor class dual specificity subfamily. Monomer.

The enzyme catalyses O-phospho-L-tyrosyl-[protein] + H2O = L-tyrosyl-[protein] + phosphate. The catalysed reaction is O-phospho-L-seryl-[protein] + H2O = L-seryl-[protein] + phosphate. It catalyses the reaction O-phospho-L-threonyl-[protein] + H2O = L-threonyl-[protein] + phosphate. Functionally, has phosphatase activity with the synthetic substrate 6,8-difluoro-4-methylumbelliferyl phosphate (in vitro). Has almost no detectable activity with phosphotyrosine, even less activity with phosphothreonine and displays complete lack of activity with phosphoserine. The poor activity with phosphotyrosine may be due to steric hindrance by bulky amino acid sidechains that obstruct access to the active site. In Mus musculus (Mouse), this protein is Dual specificity phosphatase 28 (Dusp28).